Consider the following 224-residue polypeptide: UPF0758 protein Maqu_3564 (224 aa).

The 123-residue stretch at proline 102–methionine 224 folds into the MPN domain. The Zn(2+) site is built by histidine 173, histidine 175, and aspartate 186. Positions histidine 173–aspartate 186 match the JAMM motif motif.

The protein belongs to the UPF0758 family.

This is UPF0758 protein Maqu_3564 from Marinobacter nauticus (strain ATCC 700491 / DSM 11845 / VT8) (Marinobacter aquaeolei).